The primary structure comprises 177 residues: MAEFATIARPYAKALFGLAQEKNQIESWLGGLEKLAAVVQEGKVALLIDRPETNASEKADILIDLVGLKDKELKNFVIVLAGQKRLSILPEVYAQYQDLTLSFNHIKSAVIYSAYPLTDKQVGELAQMLNKRFDSELKISVEIEPELIGGIKVEVGDQVLDLSVQGKLSALYTTMTN.

This sequence belongs to the ATPase delta chain family. As to quaternary structure, F-type ATPases have 2 components, F(1) - the catalytic core - and F(0) - the membrane proton channel. F(1) has five subunits: alpha(3), beta(3), gamma(1), delta(1), epsilon(1). F(0) has three main subunits: a(1), b(2) and c(10-14). The alpha and beta chains form an alternating ring which encloses part of the gamma chain. F(1) is attached to F(0) by a central stalk formed by the gamma and epsilon chains, while a peripheral stalk is formed by the delta and b chains.

Its subcellular location is the cell inner membrane. In terms of biological role, f(1)F(0) ATP synthase produces ATP from ADP in the presence of a proton or sodium gradient. F-type ATPases consist of two structural domains, F(1) containing the extramembraneous catalytic core and F(0) containing the membrane proton channel, linked together by a central stalk and a peripheral stalk. During catalysis, ATP synthesis in the catalytic domain of F(1) is coupled via a rotary mechanism of the central stalk subunits to proton translocation. This protein is part of the stalk that links CF(0) to CF(1). It either transmits conformational changes from CF(0) to CF(1) or is implicated in proton conduction. This chain is ATP synthase subunit delta, found in Neisseria gonorrhoeae (strain NCCP11945).